The following is a 64-amino-acid chain: Large ribosomal subunit protein uL30 (64 aa).

The protein belongs to the universal ribosomal protein uL30 family. Part of the 50S ribosomal subunit.

In Rhodopseudomonas palustris (strain BisA53), this protein is Large ribosomal subunit protein uL30.